Reading from the N-terminus, the 122-residue chain is Large ribosomal subunit protein uL14 (122 aa).

Belongs to the universal ribosomal protein uL14 family. Part of the 50S ribosomal subunit. Forms a cluster with proteins L3 and L19. In the 70S ribosome, L14 and L19 interact and together make contacts with the 16S rRNA in bridges B5 and B8.

Its function is as follows. Binds to 23S rRNA. Forms part of two intersubunit bridges in the 70S ribosome. The protein is Large ribosomal subunit protein uL14 of Cutibacterium acnes (strain DSM 16379 / KPA171202) (Propionibacterium acnes).